The chain runs to 681 residues: Sodium-dependent phosphate transporter 1 (681 aa).

Helical transmembrane passes span 25-45, 66-86, 106-126, 162-182, 207-227, and 234-254; these read YLWM…SVGA, ACIL…AKVS, LMAG…VASF, IVMS…ILFF, ACTV…LLGF, and GTIL…WFFV. 2 positions are modified to phosphoserine: serine 269 and serine 273. The disordered stretch occupies residues 269–296; the sequence is SPSESPLMEKKNSLKEDHEETKLSVSDI. A compositionally biased stretch (basic and acidic residues) spans 275-290; that stretch reads LMEKKNSLKEDHEETK. 4 helical membrane-spanning segments follow: residues 515–535, 562–582, 604–624, and 654–674; these read VSLL…FAHG, VATP…GLWV, FSIE…GLPI, and IFMA…AIMA. Positions 554–562 are a; it reads DTGDVSSKV.

This sequence belongs to the inorganic phosphate transporter (PiT) (TC 2.A.20) family.

The protein resides in the cell membrane. The enzyme catalyses 2 Na(+)(out) + phosphate(out) = 2 Na(+)(in) + phosphate(in). Functionally, sodium-phosphate symporter which preferentially transports the monovalent form of phosphate with a stoichiometry of two sodium ions per phosphate ion. May play a role in extracellular matrix and cartilage calcification as well as in vascular calcification. Essential for cell proliferation but this function is independent of its phosphate transporter activity. The chain is Sodium-dependent phosphate transporter 1 (Slc20a1) from Felis catus (Cat).